A 237-amino-acid chain; its full sequence is tRNA (guanine-N(1)-)-methyltransferase (237 aa).

Residues glycine 115 and 134–139 (LGDFVL) each bind S-adenosyl-L-methionine.

It belongs to the RNA methyltransferase TrmD family. Homodimer.

The protein resides in the cytoplasm. The catalysed reaction is guanosine(37) in tRNA + S-adenosyl-L-methionine = N(1)-methylguanosine(37) in tRNA + S-adenosyl-L-homocysteine + H(+). Specifically methylates guanosine-37 in various tRNAs. The chain is tRNA (guanine-N(1)-)-methyltransferase from Synechococcus sp. (strain RCC307).